The sequence spans 245 residues: tRNA pseudouridine synthase A (245 aa).

Residue Asp52 is the Nucleophile of the active site. Tyr110 is a binding site for substrate.

This sequence belongs to the tRNA pseudouridine synthase TruA family. As to quaternary structure, homodimer.

The catalysed reaction is uridine(38/39/40) in tRNA = pseudouridine(38/39/40) in tRNA. Its function is as follows. Formation of pseudouridine at positions 38, 39 and 40 in the anticodon stem and loop of transfer RNAs. The protein is tRNA pseudouridine synthase A of Borrelia duttonii (strain Ly).